A 458-amino-acid chain; its full sequence is Plant UBX domain-containing protein 2 (458 aa).

The interval 1-103 is disordered; sequence MDDVKDKLKG…APQDGFDPYG (103 aa). A compositionally biased stretch (polar residues) spans 44 to 54; that stretch reads PIQNRFNSSQA. A compositionally biased stretch (pro residues) spans 56 to 70; the sequence is NPTPRPKPNPNPLPE. A compositionally biased stretch (polar residues) spans 74–85; that stretch reads SSSDQKISGSTR. The C2H2-type; atypical zinc finger occupies 121–143; the sequence is FECPICKNPFTSEEEVSVHVESC. The 68-residue stretch at 181-248 folds into the PUB domain; it reads SSIDVLLRLF…EIWAVMDVPS (68 aa). The region spanning 349–433 is the UBX domain; it reads KRYKRSMIRV…ELVPSALIRF (85 aa).

As to quaternary structure, interacts with CDC48A in vitro and co-fractionates with membrane-associated but not soluble CDC48A in vivo.

Its subcellular location is the membrane. Functionally, facilitates the interaction of SYP31 and CDC48A, thereby regulating an CDC48A membrane-associated function. Appears to act as a negative regulator mediating the powdery mildew-plant interaction. This Arabidopsis thaliana (Mouse-ear cress) protein is Plant UBX domain-containing protein 2.